A 600-amino-acid polypeptide reads, in one-letter code: Elongation factor 4 (600 aa).

The tr-type G domain maps to 4-186 (SKIRNFSIIA…AIVDKIPPPS (183 aa)). GTP is bound by residues 16–21 (DHGKST) and 133–136 (NKID).

Belongs to the TRAFAC class translation factor GTPase superfamily. Classic translation factor GTPase family. LepA subfamily.

Its subcellular location is the cell membrane. It carries out the reaction GTP + H2O = GDP + phosphate + H(+). Required for accurate and efficient protein synthesis under certain stress conditions. May act as a fidelity factor of the translation reaction, by catalyzing a one-codon backward translocation of tRNAs on improperly translocated ribosomes. Back-translocation proceeds from a post-translocation (POST) complex to a pre-translocation (PRE) complex, thus giving elongation factor G a second chance to translocate the tRNAs correctly. Binds to ribosomes in a GTP-dependent manner. The polypeptide is Elongation factor 4 (Mycoplasma capricolum subsp. capricolum (strain California kid / ATCC 27343 / NCTC 10154)).